Reading from the N-terminus, the 239-residue chain is Lactate utilization protein A (239 aa).

This sequence belongs to the LutA/YkgE family.

Is involved in L-lactate degradation and allows cells to grow with lactate as the sole carbon source. This Geobacillus kaustophilus (strain HTA426) protein is Lactate utilization protein A.